Reading from the N-terminus, the 354-residue chain is tRNA-specific 2-thiouridylase MnmA (354 aa).

ATP-binding positions include 6 to 13 (LLSGGVDS) and Leu-33. Cys-100 functions as the Nucleophile in the catalytic mechanism. Cys-100 and Cys-195 are oxidised to a cystine. Position 123 (Gly-123) interacts with ATP. The interaction with tRNA stretch occupies residues 145–147 (KDQ). Residue Cys-195 is the Cysteine persulfide intermediate of the active site.

The protein belongs to the MnmA/TRMU family.

The protein localises to the cytoplasm. The catalysed reaction is S-sulfanyl-L-cysteinyl-[protein] + uridine(34) in tRNA + AH2 + ATP = 2-thiouridine(34) in tRNA + L-cysteinyl-[protein] + A + AMP + diphosphate + H(+). Its function is as follows. Catalyzes the 2-thiolation of uridine at the wobble position (U34) of tRNA, leading to the formation of s(2)U34. The chain is tRNA-specific 2-thiouridylase MnmA from Borrelia duttonii (strain Ly).